We begin with the raw amino-acid sequence, 160 residues long: SsrA-binding protein (160 aa).

Belongs to the SmpB family.

Its subcellular location is the cytoplasm. In terms of biological role, required for rescue of stalled ribosomes mediated by trans-translation. Binds to transfer-messenger RNA (tmRNA), required for stable association of tmRNA with ribosomes. tmRNA and SmpB together mimic tRNA shape, replacing the anticodon stem-loop with SmpB. tmRNA is encoded by the ssrA gene; the 2 termini fold to resemble tRNA(Ala) and it encodes a 'tag peptide', a short internal open reading frame. During trans-translation Ala-aminoacylated tmRNA acts like a tRNA, entering the A-site of stalled ribosomes, displacing the stalled mRNA. The ribosome then switches to translate the ORF on the tmRNA; the nascent peptide is terminated with the 'tag peptide' encoded by the tmRNA and targeted for degradation. The ribosome is freed to recommence translation, which seems to be the essential function of trans-translation. In Rhodospirillum rubrum (strain ATCC 11170 / ATH 1.1.1 / DSM 467 / LMG 4362 / NCIMB 8255 / S1), this protein is SsrA-binding protein.